Here is a 153-residue protein sequence, read N- to C-terminus: D-aminoacyl-tRNA deacylase (153 aa).

Positions Gly142 to Pro143 match the Gly-cisPro motif, important for rejection of L-amino acids motif.

This sequence belongs to the DTD family. As to quaternary structure, homodimer.

The protein resides in the cytoplasm. It catalyses the reaction glycyl-tRNA(Ala) + H2O = tRNA(Ala) + glycine + H(+). It carries out the reaction a D-aminoacyl-tRNA + H2O = a tRNA + a D-alpha-amino acid + H(+). In terms of biological role, an aminoacyl-tRNA editing enzyme that deacylates mischarged D-aminoacyl-tRNAs. Also deacylates mischarged glycyl-tRNA(Ala), protecting cells against glycine mischarging by AlaRS. Acts via tRNA-based rather than protein-based catalysis; rejects L-amino acids rather than detecting D-amino acids in the active site. By recycling D-aminoacyl-tRNA to D-amino acids and free tRNA molecules, this enzyme counteracts the toxicity associated with the formation of D-aminoacyl-tRNA entities in vivo and helps enforce protein L-homochirality. This Cupriavidus necator (strain ATCC 17699 / DSM 428 / KCTC 22496 / NCIMB 10442 / H16 / Stanier 337) (Ralstonia eutropha) protein is D-aminoacyl-tRNA deacylase.